The sequence spans 212 residues: Claudin-7-A (212 aa).

Residues 1–7 (MANSGVQ) lie on the Cytoplasmic side of the membrane. A helical membrane pass occupies residues 8–28 (LLGFGLSLIGIIGLIVGTILP). The Extracellular segment spans residues 29 to 81 (QWKMSAYVGDSIITAVATYQGLWMSCAFQSTGQLQCKIYDSILQLDSDLQATR). A helical transmembrane segment spans residues 82-102 (ALMIVGIIVSIAGLGVASIGM). Residues 103–119 (KCTTCGADDKVRKTRTA) lie on the Cytoplasmic side of the membrane. The helical transmembrane segment at 120 to 140 (MTGGIILLVGALCAVVACSWF) threads the bilayer. The Extracellular portion of the chain corresponds to 141–162 (AHNVIRAFYNPFTPVNTKFEFG). The chain crosses the membrane as a helical span at residues 163–183 (AAIFIAWGGSFLDVLGGAMLA). Residues 184 to 212 (ASCPRSKQVSKYPKSNSTRSANGSNKEYV) are Cytoplasmic-facing. The disordered stretch occupies residues 191–212 (QVSKYPKSNSTRSANGSNKEYV).

Belongs to the claudin family.

The protein resides in the cell junction. It is found in the tight junction. The protein localises to the cell membrane. In terms of biological role, plays a major role in tight junction-specific obliteration of the intercellular space. This is Claudin-7-A from Danio rerio (Zebrafish).